The chain runs to 338 residues: Fructose-1,6-bisphosphatase class 1 (338 aa).

Mg(2+)-binding residues include glutamate 90, aspartate 112, leucine 114, and aspartate 115. Substrate is bound by residues 115–118 (DGSS), asparagine 207, and lysine 273. Glutamate 279 lines the Mg(2+) pocket.

It belongs to the FBPase class 1 family. As to quaternary structure, homotetramer. The cofactor is Mg(2+).

It is found in the cytoplasm. It carries out the reaction beta-D-fructose 1,6-bisphosphate + H2O = beta-D-fructose 6-phosphate + phosphate. The protein operates within carbohydrate biosynthesis; gluconeogenesis. The sequence is that of Fructose-1,6-bisphosphatase class 1 from Stenotrophomonas maltophilia (strain R551-3).